The following is a 117-amino-acid chain: Holo-[acyl-carrier-protein] synthase (117 aa).

Asp-8 and Glu-57 together coordinate Mg(2+).

The protein belongs to the P-Pant transferase superfamily. AcpS family. Requires Mg(2+) as cofactor.

It is found in the cytoplasm. The catalysed reaction is apo-[ACP] + CoA = holo-[ACP] + adenosine 3',5'-bisphosphate + H(+). In terms of biological role, transfers the 4'-phosphopantetheine moiety from coenzyme A to a Ser of acyl-carrier-protein. The polypeptide is Holo-[acyl-carrier-protein] synthase (Limosilactobacillus reuteri (Lactobacillus reuteri)).